Consider the following 130-residue polypeptide: UPF0713 protein YngL (130 aa).

3 consecutive transmembrane segments (helical) span residues Leu4–Phe25, Met62–Leu84, and Ile89–Gly111.

The protein belongs to the UPF0713 family.

It localises to the cell membrane. The protein is UPF0713 protein YngL (yngL) of Bacillus subtilis (strain 168).